Reading from the N-terminus, the 486-residue chain is uncharacterized protein (486 aa).

This is an uncharacterized protein from Methanocaldococcus jannaschii (strain ATCC 43067 / DSM 2661 / JAL-1 / JCM 10045 / NBRC 100440) (Methanococcus jannaschii).